Reading from the N-terminus, the 372-residue chain is Alanine racemase (372 aa).

Catalysis depends on K37, which acts as the Proton acceptor; specific for D-alanine. K37 is subject to N6-(pyridoxal phosphate)lysine. Residue R136 participates in substrate binding. Catalysis depends on Y265, which acts as the Proton acceptor; specific for L-alanine. Substrate is bound at residue M313.

This sequence belongs to the alanine racemase family. Pyridoxal 5'-phosphate is required as a cofactor.

It catalyses the reaction L-alanine = D-alanine. It functions in the pathway amino-acid biosynthesis; D-alanine biosynthesis; D-alanine from L-alanine: step 1/1. In terms of biological role, catalyzes the interconversion of L-alanine and D-alanine. May also act on other amino acids. The sequence is that of Alanine racemase (alr) from Synechocystis sp. (strain ATCC 27184 / PCC 6803 / Kazusa).